A 280-amino-acid chain; its full sequence is Ribosomal protein L11 methyltransferase (280 aa).

Positions 131, 152, 174, and 217 each coordinate S-adenosyl-L-methionine.

The protein belongs to the methyltransferase superfamily. PrmA family.

It localises to the cytoplasm. The catalysed reaction is L-lysyl-[protein] + 3 S-adenosyl-L-methionine = N(6),N(6),N(6)-trimethyl-L-lysyl-[protein] + 3 S-adenosyl-L-homocysteine + 3 H(+). Methylates ribosomal protein L11. In Bacteroides fragilis (strain ATCC 25285 / DSM 2151 / CCUG 4856 / JCM 11019 / LMG 10263 / NCTC 9343 / Onslow / VPI 2553 / EN-2), this protein is Ribosomal protein L11 methyltransferase.